Reading from the N-terminus, the 272-residue chain is MESSSINRWFEYESGHAWCESAYKYQTLPYVAEFANTCTNLPIIVLPLVNIMLLRRYLHDVNGGLIFPQLLLTFNGLASTYYHATLNLFGQLVDELSLVWIITVFLVVYIPVMKWFPEKFSKRLTLVRWVVLIVTALVSGLCFLEPNLNAIALMLFSIPAAVVINYEGKQSGIPDIESFPSRILALWGVAFSFWFADRLLCDFWLYLGTPYLHALFHLLAGLAGYTIFIMFSMIDIESRTKTHKYTAAVRYFPGKNGSIFSFPYISLKERSQ.

2 helical membrane-spanning segments follow: residues 34 to 54 and 61 to 81; these read FANTCTNLPIIVLPLVNIMLL and VNGGLIFPQLLLTFNGLASTY. A Zn(2+)-binding site is contributed by H83. 4 helical membrane passes run 96–116, 124–144, 148–168, and 183–203; these read LSLVWIITVFLVVYIPVMKWF, LTLVRWVVLIVTALVSGLCFL, LNAIALMLFSIPAAVVINYEG, and ILALWGVAFSFWFADRLLCDF. The Zn(2+) site is built by H213 and H217. The helical transmembrane segment at 214 to 234 threads the bilayer; the sequence is ALFHLLAGLAGYTIFIMFSMI. N-linked (GlcNAc...) asparagine glycosylation occurs at N256.

It belongs to the alkaline ceramidase family. Zn(2+) serves as cofactor.

It is found in the membrane. The enzyme catalyses an N-acyl-sphingoid base + H2O = a sphingoid base + a fatty acid. The catalysed reaction is an N-acylsphing-4-enine + H2O = sphing-4-enine + a fatty acid. It catalyses the reaction an N-acyl-15-methylhexadecasphing-4-enine + H2O = 15-methylhexadecasphing-4-enine + a fatty acid. The protein operates within lipid metabolism; sphingolipid metabolism. Functionally, hydrolyzes the sphingolipid ceramide into sphingoid base and free fatty acid. C.elegans contain specific sphingoid bases, which are unique or different in structure compared to the sphingoid bases found in other animals. Two examples of these distinctive compounds are: 15-methylhexadecasphinganine and 15-methylhexadecasphing-4-enine. In Caenorhabditis elegans, this protein is Alkaline ceramidase.